The chain runs to 252 residues: Pantothenate synthetase (252 aa).

29 to 36 is an ATP binding site; sequence MGNLHAGH. Histidine 36 acts as the Proton donor in catalysis. Residue glutamine 60 participates in (R)-pantoate binding. Glutamine 60 contacts beta-alanine. 146 to 149 provides a ligand contact to ATP; the sequence is GEKD. Glutamine 152 provides a ligand contact to (R)-pantoate. ATP-binding positions include valine 175 and 183–186; that span reads CSSR.

Belongs to the pantothenate synthetase family. In terms of assembly, homodimer.

The protein localises to the cytoplasm. It carries out the reaction (R)-pantoate + beta-alanine + ATP = (R)-pantothenate + AMP + diphosphate + H(+). Its pathway is cofactor biosynthesis; (R)-pantothenate biosynthesis; (R)-pantothenate from (R)-pantoate and beta-alanine: step 1/1. Catalyzes the condensation of pantoate with beta-alanine in an ATP-dependent reaction via a pantoyl-adenylate intermediate. In Legionella pneumophila (strain Lens), this protein is Pantothenate synthetase.